A 310-amino-acid polypeptide reads, in one-letter code: Transcription initiation factor IIB (310 aa).

2 repeat units span residues 126–209 and 220–301.

It belongs to the TFIIB family.

Functionally, stabilizes TBP binding to an archaeal box-A promoter. Also responsible for recruiting RNA polymerase II to the pre-initiation complex (DNA-TBP-TFIIB). The chain is Transcription initiation factor IIB from Pyrodictium occultum.